Consider the following 313-residue polypeptide: Short-chain dehydrogenase/reductase family 9C member 7 (313 aa).

Residue F29–L53 participates in NADP(+) binding. Residue S160 coordinates substrate. Y172 (proton acceptor) is an active-site residue. Residue S185 is modified to Phosphoserine.

It belongs to the short-chain dehydrogenases/reductases (SDR) family. As to expression, highly expressed in liver.

The protein localises to the cytoplasm. It carries out the reaction a N-[omega-(9R,10R)-epoxy-(13R)-hydroxy-(11E)-octadecenoyloxy]acyl-beta-D-glucosyl-(1&lt;-&gt;1)-sphing-4E-enine + NAD(+) = a N-[omega-(9R,10R)-epoxy-13-oxo-(11E)-octadecenoyloxy]acyl-beta-D-glucosyl-(1&lt;-&gt;1)-sphing-4E-enine + NADH + H(+). It catalyses the reaction a N-[omega-(9R,10R)-epoxy-(13R)-hydroxy-(11E)-octadecenoyloxy]-acylsphing-4E-enine + NAD(+) = a N-[omega-(9R,10R)-epoxy-13-oxo-(11E)-octadecenoyloxy]-acylsphing-4E-enine + NADH + H(+). Functionally, plays a crucial role in the formation of the epidermal permeability barrier. Catalyzes the NAD+-dependent dehydrogenation of the linoleate 9,10-trans-epoxy-11E-13-alcohol esterified in omega-O-acylceramides (such as in N-[omega-(9R,10R)-epoxy-(13R)-hydroxy-(11E)-octadecenoyloxy]-acylsphing-4E-enine) to the corresponding 13-ketone, the reactive moiety required for binding of epidermal ceramides to proteins. Displays weak conversion of all-trans-retinal to all-trans-retinol in the presence of NADH. Has apparently no steroid dehydrogenase activity. This is Short-chain dehydrogenase/reductase family 9C member 7 (Sdr9c7) from Mus musculus (Mouse).